A 367-amino-acid chain; its full sequence is Avirulence protein ATR5 (367 aa).

An N-terminal signal peptide occupies residues 1 to 16 (MRLISPALVVSTAIQA). The N-linked (GlcNAc...) asparagine glycan is linked to N20. The tract at residues 33–65 (NPLASAHPPDVGYDGVPAGRVRNPDDPTTEERT) is disordered. Residues 54–65 (RNPDDPTTEERT) show a composition bias toward basic and acidic residues. The short motif at 61–64 (TEER) is the dEER element.

The protein belongs to the RxLR effector family.

It is found in the secreted. Its subcellular location is the host cell. Functionally, secreted effector that acts as an elicitor of hypersensitive response (HR) specifically on plants carrying defense protein RPP5. The chain is Avirulence protein ATR5 from Hyaloperonospora arabidopsidis (strain Emoy2) (Downy mildew agent).